The primary structure comprises 490 residues: MARFELQKLYIDGGYTDAGSDATFDAINPANGEVLAQVQRATKEDVERAVVSAEKGQKIWAAMTAMERSRILRRAVEILRERNDELAALETLDTGKAFSETKYVDIVTGADVLEYYAGLVPAIEGEQIPLRTTSFVYTRREPLGVVAGIGAWNYPIQIALWKSAPALAAGNAMIFKPSEVTSLTTLKLAEIYTEAGLPDGVFNVLTGSGREVGTWLTEHPRIEKVSFTGGTDTGKKVMASASSSSLKDVTMELGGKSPLIIFDDADLDRAADTAMMANFYSSGQVCTNGTRVFVPSHLKAAFEAKIAERVARIRIGNPEDENTNFGPLVSFPHMESVLGYIAKGKEEGARVLCGGERLTDGEFAKGAFVAPTVFTDCTDDMTIVREEIFGPVMAILTYETEEEVIRRANDTDFGLAAGLVTKDLNRAHRVIHQLEAGICWINAWGESDAKMPVGGYKQSGVGRENGISSLNNFTRIKSVQVELGDYASVF.

Ile27 and Asp93 together coordinate K(+). 150-152 contributes to the NAD(+) binding site; it reads GAW. Residue Lys162 is the Charge relay system of the active site. NAD(+) is bound at residue 176–179; the sequence is KPSE. Val180 lines the K(+) pocket. NAD(+) is bound at residue 230 to 233; sequence GTDT. Leu246 provides a ligand contact to K(+). Glu252 acts as the Proton acceptor in catalysis. Residues Gly254, Cys286, and Glu387 each contribute to the NAD(+) site. Cys286 functions as the Nucleophile in the catalytic mechanism. Cys286 carries the post-translational modification Cysteine sulfenic acid (-SOH). 2 residues coordinate K(+): Lys457 and Gly460. Residue Glu464 is the Charge relay system of the active site.

This sequence belongs to the aldehyde dehydrogenase family. In terms of assembly, dimer of dimers. K(+) serves as cofactor.

The enzyme catalyses betaine aldehyde + NAD(+) + H2O = glycine betaine + NADH + 2 H(+). It participates in amine and polyamine biosynthesis; betaine biosynthesis via choline pathway; betaine from betaine aldehyde: step 1/1. Involved in the biosynthesis of the osmoprotectant glycine betaine. Catalyzes the irreversible oxidation of betaine aldehyde to the corresponding acid. This is Betaine aldehyde dehydrogenase from Pseudomonas fluorescens (strain ATCC BAA-477 / NRRL B-23932 / Pf-5).